Consider the following 186-residue polypeptide: TATA box-binding protein-like 1 (186 aa).

Belongs to the TBP family.

It is found in the cytoplasm. The protein resides in the nucleus. In terms of biological role, part of a specialized transcription system that mediates the transcription of most ribosomal proteins through the 5'-TCT-3' motif which is a core promoter element at these genes. Seems to also mediate the transcription of NF1. Does not bind the TATA box. Members of the TBP family are differentially required to regulate transcription and development during early embryogenesis. In Danio rerio (Zebrafish), this protein is TATA box-binding protein-like 1.